The following is a 481-amino-acid chain: MNVSVEAKNIGKVVQIIGPVLDVEFSADQMPNIYNAIVVEGENLAGTKVSVTCEVQQLLGDHCVRAVSMSATDGLMRGMDVVDTGAPLTVPVGTSTLGRIFNVLGEPVDNLGDVSNEGGLPIHRPAPLFVDLDTQLSIFKTGIKVVDLLAPYRRGGKIGLFGGAGVGKTVLIMELINNIAKAHGGVSVFGGVGERTREGNDLYAEMKESKVINEDNLSESKVALVYGQMNEPPGARMRVGLTALTMAEYFRDINKQDVLLFIDNIFRFVQAGSEVSALLGRMPSAVGYQPTLATEMGGLQERITSTKDGSITSIQAVYVPADDLTDPAPATTFAHLDATTVLSRNLAAKGIYPAVDPLDSTSTMLQPQTLGEEHYGCAQAVKTTLQRYKELQDIIAILGLDELSDEDRLVVARARKIERFLSQPFFVAEVFTGSPGKYVSLSETIQGFSQILTGELDDLPEQSFYLVGNLDEAIAKAATLG.

162-169 (GGAGVGKT) contacts ATP.

It belongs to the ATPase alpha/beta chains family. F-type ATPases have 2 components, CF(1) - the catalytic core - and CF(0) - the membrane proton channel. CF(1) has five subunits: alpha(3), beta(3), gamma(1), delta(1), epsilon(1). CF(0) has four main subunits: a(1), b(1), b'(1) and c(9-12).

It localises to the plastid. Its subcellular location is the chloroplast thylakoid membrane. It carries out the reaction ATP + H2O + 4 H(+)(in) = ADP + phosphate + 5 H(+)(out). In terms of biological role, produces ATP from ADP in the presence of a proton gradient across the membrane. The catalytic sites are hosted primarily by the beta subunits. In Oltmannsiellopsis viridis (Marine flagellate), this protein is ATP synthase subunit beta, chloroplastic.